A 154-amino-acid chain; its full sequence is AP-1 complex subunit sigma-3 (154 aa).

The protein belongs to the adaptor complexes small subunit family. As to quaternary structure, adaptor protein complex 1 (AP-1) is a heterotetramer composed of two large adaptins (gamma-type subunit AP1G1 and beta-type subunit AP1B1), a medium adaptin (mu-type subunit AP1M1 or AP1M2) and a small adaptin (sigma-type subunit AP1S1 or AP1S2 or AP1S3).

It is found in the golgi apparatus. The protein localises to the cytoplasmic vesicle membrane. The protein resides in the membrane. It localises to the clathrin-coated pit. In terms of biological role, subunit of clathrin-associated adaptor protein complex 1 that plays a role in protein sorting in the late-Golgi/trans-Golgi network (TGN) and/or endosomes. The AP complexes mediate both the recruitment of clathrin to membranes and the recognition of sorting signals within the cytosolic tails of transmembrane cargo molecules. Involved in TLR3 trafficking. This chain is AP-1 complex subunit sigma-3 (Ap1s3), found in Mus musculus (Mouse).